Reading from the N-terminus, the 443-residue chain is Exodeoxyribonuclease 7 large subunit (443 aa).

Belongs to the XseA family. Heterooligomer composed of large and small subunits.

Its subcellular location is the cytoplasm. It carries out the reaction Exonucleolytic cleavage in either 5'- to 3'- or 3'- to 5'-direction to yield nucleoside 5'-phosphates.. Bidirectionally degrades single-stranded DNA into large acid-insoluble oligonucleotides, which are then degraded further into small acid-soluble oligonucleotides. The protein is Exodeoxyribonuclease 7 large subunit of Legionella pneumophila (strain Corby).